The sequence spans 58 residues: MGKTVVRSNESLDDALRRFKRSVSKAGTIQEYRKREFYEKPSVKRKLKSEAARKRKKF.

Belongs to the bacterial ribosomal protein bS21 family.

The polypeptide is Small ribosomal subunit protein bS21 (Latilactobacillus sakei subsp. sakei (strain 23K) (Lactobacillus sakei subsp. sakei)).